Reading from the N-terminus, the 291-residue chain is Protein CMSS1 (291 aa).

The disordered stretch occupies residues 1-96; the sequence is MADDLGDEWW…KKTITDVLTS (96 aa). Residues 17–27 are compositionally biased toward acidic residues; it reads DVPEVEEETEH. Residues 58–79 show a composition bias toward basic and acidic residues; the sequence is VKKECFITQERSEEKPDNESNK.

The protein belongs to the CMS1 family.

The polypeptide is Protein CMSS1 (cmss1) (Danio rerio (Zebrafish)).